The chain runs to 270 residues: Acetyl-coenzyme A carboxylase carboxyl transferase subunit beta (270 aa).

The 255-residue stretch at 16–270 (LFAKCPACKH…KLLAFHGGSK (255 aa)) folds into the CoA carboxyltransferase N-terminal domain. Cys20, Cys23, Cys38, and Cys41 together coordinate Zn(2+). A C4-type zinc finger spans residues 20-41 (CPACKHMIYQKDLGLEKICPKC).

Belongs to the AccD/PCCB family. In terms of assembly, acetyl-CoA carboxylase is a heterohexamer composed of biotin carboxyl carrier protein (AccB), biotin carboxylase (AccC) and two subunits each of ACCase subunit alpha (AccA) and ACCase subunit beta (AccD). Zn(2+) is required as a cofactor.

Its subcellular location is the cytoplasm. It catalyses the reaction N(6)-carboxybiotinyl-L-lysyl-[protein] + acetyl-CoA = N(6)-biotinyl-L-lysyl-[protein] + malonyl-CoA. The protein operates within lipid metabolism; malonyl-CoA biosynthesis; malonyl-CoA from acetyl-CoA: step 1/1. In terms of biological role, component of the acetyl coenzyme A carboxylase (ACC) complex. Biotin carboxylase (BC) catalyzes the carboxylation of biotin on its carrier protein (BCCP) and then the CO(2) group is transferred by the transcarboxylase to acetyl-CoA to form malonyl-CoA. The protein is Acetyl-coenzyme A carboxylase carboxyl transferase subunit beta of Streptococcus mutans serotype c (strain NN2025).